The sequence spans 333 residues: Ribonucleoside-diphosphate reductase small chain B (333 aa).

Fe cation is bound by residues aspartate 76, glutamate 107, and histidine 110. Tyrosine 114 is a catalytic residue. Glutamate 169, glutamate 203, and histidine 206 together coordinate Fe cation.

Belongs to the ribonucleoside diphosphate reductase small chain family. In terms of assembly, heterodimer of a large and a small chain. Requires Fe cation as cofactor. Expressed in roots, rosette leaves, stems and flowers.

It is found in the cytoplasm. It catalyses the reaction a 2'-deoxyribonucleoside 5'-diphosphate + [thioredoxin]-disulfide + H2O = a ribonucleoside 5'-diphosphate + [thioredoxin]-dithiol. Functionally, provides the precursors necessary for DNA synthesis. Catalyzes the biosynthesis of deoxyribonucleotides from the corresponding ribonucleotides. This is Ribonucleoside-diphosphate reductase small chain B (RNR2B) from Arabidopsis thaliana (Mouse-ear cress).